Here is a 294-residue protein sequence, read N- to C-terminus: 4-hydroxy-tetrahydrodipicolinate synthase (294 aa).

Position 47 (Thr47) interacts with pyruvate. Tyr135 serves as the catalytic Proton donor/acceptor. Lys163 acts as the Schiff-base intermediate with substrate in catalysis. Thr205 provides a ligand contact to pyruvate.

This sequence belongs to the DapA family. As to quaternary structure, homotetramer; dimer of dimers.

Its subcellular location is the cytoplasm. It carries out the reaction L-aspartate 4-semialdehyde + pyruvate = (2S,4S)-4-hydroxy-2,3,4,5-tetrahydrodipicolinate + H2O + H(+). Its pathway is amino-acid biosynthesis; L-lysine biosynthesis via DAP pathway; (S)-tetrahydrodipicolinate from L-aspartate: step 3/4. Catalyzes the condensation of (S)-aspartate-beta-semialdehyde [(S)-ASA] and pyruvate to 4-hydroxy-tetrahydrodipicolinate (HTPA). This is 4-hydroxy-tetrahydrodipicolinate synthase from Rickettsia rickettsii.